Reading from the N-terminus, the 658-residue chain is NUAK family SNF1-like kinase 1 (658 aa).

The residue at position 1 (M1) is an N-acetylmethionine. Residues 1–53 (MEGAAVSAAGDGPAVETGLPGSPLEAVAGATAAPVEPRKPHGVKRHHHKHNLK) form a disordered region. Residue S22 is modified to Phosphoserine. Residues 40-53 (PHGVKRHHHKHNLK) show a composition bias toward basic residues. One can recognise a Protein kinase domain in the interval 56–307 (YELQETLGKG…IEDIANHWWV (252 aa)). ATP contacts are provided by residues 62-70 (LGKGTYGKV) and K85. D179 (proton acceptor) is an active-site residue. T212 bears the Phosphothreonine; by LKB1 mark. 2 disordered regions span residues 353 to 422 (LAKP…EGIV) and 441 to 568 (IPLP…SYSR). The segment covering 378 to 393 (FPQSGQDSVPESPSKL) has biased composition (polar residues). A compositionally biased stretch (basic residues) spans 394–405 (SSKRPKGILKKR). The GILK motif motif lies at 400 to 403 (GILK). At S456 the chain carries Phosphoserine. Residues 519–530 (SCRRKGILKHSS) are compositionally biased toward basic residues. Residues 559–568 (SDGISRSYSR) show a composition bias toward low complexity. S601 is modified (phosphoserine; by PKB/AKT1).

It belongs to the protein kinase superfamily. CAMK Ser/Thr protein kinase family. SNF1 subfamily. As to quaternary structure, interacts (via GILK motif) with PPP1CB; the interaction is direct and bridges NUAK1 and PPP1R12A. Interacts with CDKN1A. It depends on Mg(2+) as a cofactor. Post-translationally, phosphorylated at Thr-212 by STK11/LKB1 in complex with STE20-related adapter-alpha (STRADA) pseudo kinase and CAB39. Not dephosphorylated by the myosin PP1 complex when regulating its activity, due to the presence of PPP1R12A, which prevents myosin PP1 from dephosphorylating NUAK1. Phosphorylated by STK38L upon stimulation with IGF1. In terms of processing, ubiquitinated with 'Lys-29'- and 'Lys-33'-linked polyubiquitins which appear to impede LKB1-mediated phosphorylation. Deubiquitinated by USP9X. In terms of tissue distribution, expressed in the developing central nervous system, in epidermis, and some other tissues.

Its subcellular location is the nucleus. The protein resides in the cytoplasm. It catalyses the reaction L-seryl-[protein] + ATP = O-phospho-L-seryl-[protein] + ADP + H(+). The enzyme catalyses L-threonyl-[protein] + ATP = O-phospho-L-threonyl-[protein] + ADP + H(+). Activated by phosphorylation on Thr-212. Activated by phosphorylation at Ser-601 AKT1 during glucose starvation; the relevance of such activation in normal cells is however unsure. In terms of biological role, serine/threonine-protein kinase involved in various processes such as cell adhesion, regulation of cell ploidy and senescence, cell proliferation and tumor progression. Phosphorylates ATM, CASP6, LATS1, PPP1R12A and p53/TP53. Acts as a regulator of cellular senescence and cellular ploidy by mediating phosphorylation of 'Ser-464' of LATS1, thereby controlling its stability. Controls cell adhesion by regulating activity of the myosin protein phosphatase 1 (PP1) complex. Acts by mediating phosphorylation of PPP1R12A subunit of myosin PP1: phosphorylated PPP1R12A then interacts with 14-3-3, leading to reduced dephosphorylation of myosin MLC2 by myosin PP1. May be involved in DNA damage response: phosphorylates p53/TP53 at 'Ser-15' and 'Ser-392' and is recruited to the CDKN1A/WAF1 promoter to participate in transcription activation by p53/TP53. May also act as a tumor malignancy-associated factor by promoting tumor invasion and metastasis under regulation and phosphorylation by AKT1. Suppresses Fas-induced apoptosis by mediating phosphorylation of CASP6, thereby suppressing the activation of the caspase and the subsequent cleavage of CFLAR. Regulates UV radiation-induced DNA damage response mediated by CDKN1A. In association with STK11, phosphorylates CDKN1A in response to UV radiation and contributes to its degradation which is necessary for optimal DNA repair. In Mus musculus (Mouse), this protein is NUAK family SNF1-like kinase 1 (Nuak1).